The following is a 474-amino-acid chain: Adenosylhomocysteinase (474 aa).

Substrate-binding residues include Thr53, Asp135, and Glu197. 198–200 is an NAD(+) binding site; sequence TTT. Lys227 and Asp231 together coordinate substrate. NAD(+) contacts are provided by residues Asn232, 261–266, Glu284, Asn319, 340–342, and Asn388; these read GYGDVG and IGH.

This sequence belongs to the adenosylhomocysteinase family. The cofactor is NAD(+).

The protein localises to the cytoplasm. The enzyme catalyses S-adenosyl-L-homocysteine + H2O = L-homocysteine + adenosine. It participates in amino-acid biosynthesis; L-homocysteine biosynthesis; L-homocysteine from S-adenosyl-L-homocysteine: step 1/1. Its function is as follows. May play a key role in the regulation of the intracellular concentration of adenosylhomocysteine. The sequence is that of Adenosylhomocysteinase from Corynebacterium glutamicum (strain ATCC 13032 / DSM 20300 / JCM 1318 / BCRC 11384 / CCUG 27702 / LMG 3730 / NBRC 12168 / NCIMB 10025 / NRRL B-2784 / 534).